The sequence spans 579 residues: Mitochondrial distribution and morphology protein 36 (579 aa).

The segment at 1–27 is disordered; the sequence is MDENGTVKPGYELKGLNSGNSRSNMDK. Phosphoserine is present on S42. Disordered regions lie at residues 378–401 and 446–518; these read TPIN…GRRL and DNKH…ESQS. Over residues 379-390 the composition is skewed to polar residues; that stretch reads PINSSDSDNLSN. The segment covering 446–463 has biased composition (basic and acidic residues); sequence DNKHSTKDTDSNIRRNEH. Residues 495 to 518 show a composition bias toward low complexity; it reads PSQSSSRMSTLPLSPSSSLLESQS.

Involved in mitochondrial distribution and morphology. This Saccharomyces cerevisiae (strain ATCC 204508 / S288c) (Baker's yeast) protein is Mitochondrial distribution and morphology protein 36 (MDM36).